Reading from the N-terminus, the 203-residue chain is Small ribosomal subunit protein uS4 (203 aa).

Positions R93–K153 constitute an S4 RNA-binding domain.

This sequence belongs to the universal ribosomal protein uS4 family. In terms of assembly, part of the 30S ribosomal subunit. Contacts protein S5. The interaction surface between S4 and S5 is involved in control of translational fidelity.

One of the primary rRNA binding proteins, it binds directly to 16S rRNA where it nucleates assembly of the body of the 30S subunit. Its function is as follows. With S5 and S12 plays an important role in translational accuracy. The polypeptide is Small ribosomal subunit protein uS4 (Lactobacillus gasseri (strain ATCC 33323 / DSM 20243 / BCRC 14619 / CIP 102991 / JCM 1131 / KCTC 3163 / NCIMB 11718 / NCTC 13722 / AM63)).